The sequence spans 320 residues: Mitochondrial oxaloacetate transport protein (320 aa).

3 Solcar repeats span residues Leu-21–Thr-114, Asn-126–Met-218, and Glu-227–Leu-313. Helical transmembrane passes span Gly-26–Ile-47, Gly-91–Ile-111, Ala-129–Phe-145, Ala-197–Arg-217, Leu-233–Val-253, and Leu-285–Phe-306.

This sequence belongs to the mitochondrial carrier (TC 2.A.29) family.

The protein resides in the mitochondrion inner membrane. The enzyme catalyses a dicarboxylate(in) + sulfate(out) = a dicarboxylate(out) + sulfate(in). The catalysed reaction is (2S)-2-isopropylmalate(in) + sulfate(out) = (2S)-2-isopropylmalate(out) + sulfate(in). It catalyses the reaction (2R,3S)-3-isopropylmalate(in) + sulfate(out) = (2R,3S)-3-isopropylmalate(out) + sulfate(in). It carries out the reaction malonate(in) + sulfate(out) = malonate(out) + sulfate(in). The enzyme catalyses oxaloacetate(in) + sulfate(out) = oxaloacetate(out) + sulfate(in). The catalysed reaction is thiosulfate(in) + sulfate(out) = thiosulfate(out) + sulfate(in). In terms of biological role, antiporter that exchanges dicarboxylates and sulfur oxoanions across the inner membrane of mitochondria. Exports alpha-isopropylmalate from mitochondrial matrix to the cytosol, where it serves as a precursor for leucine biosynthesis. This chain is Mitochondrial oxaloacetate transport protein (oac1), found in Schizosaccharomyces pombe (strain 972 / ATCC 24843) (Fission yeast).